Here is a 103-residue protein sequence, read N- to C-terminus: UPF0091 protein PH0944 (103 aa).

It belongs to the UPF0091 family.

The protein is UPF0091 protein PH0944 of Pyrococcus horikoshii (strain ATCC 700860 / DSM 12428 / JCM 9974 / NBRC 100139 / OT-3).